The following is a 170-amino-acid chain: Acetyl-CoA decarbonylase/synthase complex subunit epsilon 1 (170 aa).

Belongs to the CdhB family. In terms of assembly, heterotetramer of two alpha and two epsilon subunits. The ACDS complex is made up of alpha, epsilon, beta, gamma and delta subunits with a probable stoichiometry of (alpha(2)epsilon(2))(4)-beta(8)-(gamma(1)delta(1))(8).

Its pathway is one-carbon metabolism; methanogenesis from acetate. Part of a complex that catalyzes the reversible cleavage of acetyl-CoA, allowing growth on acetate as sole source of carbon and energy. The alpha-epsilon subcomponent functions as a carbon monoxide dehydrogenase. The precise role of the epsilon subunit is unclear; it may have a stabilizing role within the alpha(2)epsilon(2) component and/or be involved in electron transfer to FAD during a potential FAD-mediated CO oxidation. The polypeptide is Acetyl-CoA decarbonylase/synthase complex subunit epsilon 1 (cdhB1) (Methanosarcina acetivorans (strain ATCC 35395 / DSM 2834 / JCM 12185 / C2A)).